A 365-amino-acid chain; its full sequence is Holliday junction branch migration complex subunit RuvB (365 aa).

The tract at residues 1–191 (MSPELGGGYD…FGFTAHMDFY (191 aa)) is large ATPase domain (RuvB-L). Residues Leu-30, Arg-31, Gly-72, Lys-75, Thr-76, Ser-77, 138-140 (EDF), Arg-181, Tyr-191, and Arg-228 contribute to the ATP site. Residue Thr-76 participates in Mg(2+) binding. Positions 192 to 262 (EPAELKQILM…IAHAALAVYD (71 aa)) are small ATPAse domain (RuvB-S). Residues 265–365 (QLGLDRLDRS…QASLFDPEDP (101 aa)) form a head domain (RuvB-H) region. Positions 320 and 325 each coordinate DNA.

The protein belongs to the RuvB family. In terms of assembly, homohexamer. Forms an RuvA(8)-RuvB(12)-Holliday junction (HJ) complex. HJ DNA is sandwiched between 2 RuvA tetramers; dsDNA enters through RuvA and exits via RuvB. An RuvB hexamer assembles on each DNA strand where it exits the tetramer. Each RuvB hexamer is contacted by two RuvA subunits (via domain III) on 2 adjacent RuvB subunits; this complex drives branch migration. In the full resolvosome a probable DNA-RuvA(4)-RuvB(12)-RuvC(2) complex forms which resolves the HJ.

It localises to the cytoplasm. It carries out the reaction ATP + H2O = ADP + phosphate + H(+). Functionally, the RuvA-RuvB-RuvC complex processes Holliday junction (HJ) DNA during genetic recombination and DNA repair, while the RuvA-RuvB complex plays an important role in the rescue of blocked DNA replication forks via replication fork reversal (RFR). RuvA specifically binds to HJ cruciform DNA, conferring on it an open structure. The RuvB hexamer acts as an ATP-dependent pump, pulling dsDNA into and through the RuvAB complex. RuvB forms 2 homohexamers on either side of HJ DNA bound by 1 or 2 RuvA tetramers; 4 subunits per hexamer contact DNA at a time. Coordinated motions by a converter formed by DNA-disengaged RuvB subunits stimulates ATP hydrolysis and nucleotide exchange. Immobilization of the converter enables RuvB to convert the ATP-contained energy into a lever motion, pulling 2 nucleotides of DNA out of the RuvA tetramer per ATP hydrolyzed, thus driving DNA branch migration. The RuvB motors rotate together with the DNA substrate, which together with the progressing nucleotide cycle form the mechanistic basis for DNA recombination by continuous HJ branch migration. Branch migration allows RuvC to scan DNA until it finds its consensus sequence, where it cleaves and resolves cruciform DNA. This Rhodococcus opacus (strain B4) protein is Holliday junction branch migration complex subunit RuvB.